The following is a 129-amino-acid chain: Follitropin subunit beta (129 aa).

The N-terminal stretch at 1 to 20 (MKSVQLCFLFCCWRAICCKS) is a signal peptide. 6 cysteine pairs are disulfide-bonded: cysteine 21–cysteine 69, cysteine 35–cysteine 84, cysteine 38–cysteine 122, cysteine 46–cysteine 100, cysteine 50–cysteine 102, and cysteine 105–cysteine 112. Residues asparagine 25 and asparagine 42 are each glycosylated (N-linked (GlcNAc...) asparagine).

The protein belongs to the glycoprotein hormones subunit beta family. In terms of assembly, heterodimer. The active follitropin is a heterodimer composed of an alpha chain/CGA shared with other hormones and a unique beta chain/FSHB shown here.

It is found in the secreted. In terms of biological role, together with the alpha chain CGA constitutes follitropin, the follicle-stimulating hormone, and provides its biological specificity to the hormone heterodimer. Binds FSHR, a G protein-coupled receptor, on target cells to activate downstream signaling pathways. Follitropin is involved in follicle development and spermatogenesis in reproductive organs. This is Follitropin subunit beta (FSHB) from Ailuropoda melanoleuca (Giant panda).